Here is a 455-residue protein sequence, read N- to C-terminus: Bifunctional protein GlmU (455 aa).

The segment at 1 to 226 (MSLDIVILAA…AMEVQGANDR (226 aa)) is pyrophosphorylase. UDP-N-acetyl-alpha-D-glucosamine is bound by residues 8-11 (LAAG), K22, Q73, 78-79 (GT), 99-101 (YGD), G136, E151, N166, and N224. D101 contributes to the Mg(2+) binding site. N224 serves as a coordination point for Mg(2+). Residues 227 to 247 (KQLSELERHYQMREARRLMAA) form a linker region. The interval 248-455 (GVTLRDPARF…WKRPVKISKD (208 aa)) is N-acetyltransferase. Residues R330 and K348 each coordinate UDP-N-acetyl-alpha-D-glucosamine. Residue H360 is the Proton acceptor of the active site. Residues Y363 and N374 each coordinate UDP-N-acetyl-alpha-D-glucosamine. Residues A377, 383 to 384 (NY), S402, A420, and R437 contribute to the acetyl-CoA site.

This sequence in the N-terminal section; belongs to the N-acetylglucosamine-1-phosphate uridyltransferase family. In the C-terminal section; belongs to the transferase hexapeptide repeat family. Homotrimer. The cofactor is Mg(2+).

It localises to the cytoplasm. The catalysed reaction is alpha-D-glucosamine 1-phosphate + acetyl-CoA = N-acetyl-alpha-D-glucosamine 1-phosphate + CoA + H(+). It catalyses the reaction N-acetyl-alpha-D-glucosamine 1-phosphate + UTP + H(+) = UDP-N-acetyl-alpha-D-glucosamine + diphosphate. The protein operates within nucleotide-sugar biosynthesis; UDP-N-acetyl-alpha-D-glucosamine biosynthesis; N-acetyl-alpha-D-glucosamine 1-phosphate from alpha-D-glucosamine 6-phosphate (route II): step 2/2. It participates in nucleotide-sugar biosynthesis; UDP-N-acetyl-alpha-D-glucosamine biosynthesis; UDP-N-acetyl-alpha-D-glucosamine from N-acetyl-alpha-D-glucosamine 1-phosphate: step 1/1. Its pathway is bacterial outer membrane biogenesis; LPS lipid A biosynthesis. Its function is as follows. Catalyzes the last two sequential reactions in the de novo biosynthetic pathway for UDP-N-acetylglucosamine (UDP-GlcNAc). The C-terminal domain catalyzes the transfer of acetyl group from acetyl coenzyme A to glucosamine-1-phosphate (GlcN-1-P) to produce N-acetylglucosamine-1-phosphate (GlcNAc-1-P), which is converted into UDP-GlcNAc by the transfer of uridine 5-monophosphate (from uridine 5-triphosphate), a reaction catalyzed by the N-terminal domain. This Pseudomonas syringae pv. syringae (strain B728a) protein is Bifunctional protein GlmU.